A 1010-amino-acid chain; its full sequence is Lethal(2) giant larvae protein homolog SRO77 (1010 aa).

WD repeat units lie at residues 47-80 (TVTT…VVFT), 87-122 (IKHM…TTVF), 127-163 (ITCI…KLKI), 182-215 (SIQW…KQHF), 240-275 (VIQS…IHAR), 299-364 (AIFK…QKLF), 372-407 (LINF…ETLI), 431-504 (VTTC…FEVN), 518-595 (KNIS…STVI), 602-637 (VSAI…FNEN), 649-700 (VSTV…DATK), 709-763 (GINS…THAL), 768-815 (IATS…KNLR), and 829-852 (SILE…SVLN). Residues 932–958 (SNAARKLPPGTEDHRYARPVRSSGRSN) are disordered.

The protein belongs to the WD repeat L(2)GL family. In terms of assembly, interacts with SEC9.

Its function is as follows. Acts as an allosteric regulator of polarized exocytosis by promoting the targeted fusion of vesicles with the plasma membrane. Involved in maintenance of ion homeostasis in cells exposed to NaCl stress. May be involved in the targeting of the myosin proteins to their intrinsic pathways. Multicopy suppressor of RHO3. May also participate in the maintenance of cell polarity and bud growth. The chain is Lethal(2) giant larvae protein homolog SRO77 (SRO77) from Saccharomyces cerevisiae (strain ATCC 204508 / S288c) (Baker's yeast).